A 905-amino-acid chain; its full sequence is Gamma-tubulin complex component 2 (905 aa).

The residue at position 83 (Tyr-83) is a Phosphotyrosine. The interval 877 to 905 (AERSQKAAPQVPVPRGPSAPAPRVAIPAQ) is disordered. The segment covering 887 to 896 (VPVPRGPSAP) has biased composition (pro residues).

It belongs to the TUBGCP family. In terms of assembly, component of the gamma-tubulin ring complex (gTuRC) consisting of TUBGCP2, TUBGCP3, TUBGCP4, TUBGCP5 and TUBGCP6 and gamma-tubulin TUBG1 or TUBG2. TUBGCP2, TUBGCP3, TUBGCP4, TUBGCP5 and TUBGCP6 assemble in a 5:5:2:1:1 stoichiometry; each is associated with a gamma-tubulin, thereby arranging 14 gamma-tubulins in a helical manner. Gamma-tubulin at the first position is blocked by TUBGCP3 at the last position, allowing 13 protafilaments to grow into a microtubule. The gTuRC (via TUBGCP3 and TUBGCP6) interacts with ACTB and MZT1; the interactions form a luminal bridge that stabilizes the initial structure during complex assembly. The gTuRC (via TUBGCP2) interacts with MZT2A/MZT2B and CDK5RAP2 (via CM1 motif); the interactions play a role in gTuRC activation. Interacts with ATF5; the ATF5:PCNT:polyglutamylated tubulin (PGT) tripartite unites the mother centriole and the pericentriolar material (PCM) in the centrosome.

The protein resides in the cytoplasm. Its subcellular location is the cytoskeleton. It localises to the microtubule organizing center. It is found in the centrosome. Functionally, component of the gamma-tubulin ring complex (gTuRC) which mediates microtubule nucleation. The gTuRC regulates the minus-end nucleation of alpha-beta tubulin heterodimers that grow into microtubule protafilaments, a critical step in centrosome duplication and spindle formation. Plays a role in neuronal migration. This Mus musculus (Mouse) protein is Gamma-tubulin complex component 2 (Tubgcp2).